A 513-amino-acid polypeptide reads, in one-letter code: Sphingolipid C9-methyltransferase 1 (513 aa).

Transmembrane regions (helical) follow at residues 63–83 (FLVA…GGGL) and 85–105 (TAIF…WTVM). Residues 228–229 (YT), 265–273 (LLDIGCGWG), 291–296 (TLARNQ), and 321–322 (YR) contribute to the S-adenosyl-L-methionine site.

It belongs to the CFA/CMAS family.

Its subcellular location is the membrane. The enzyme catalyses a (4E,8E)-4-sphinga-4,8-dienine ceramide + S-adenosyl-L-methionine = a 9-methyl-(4E,8E)-sphinga-4,8-dienine ceramide + S-adenosyl-L-homocysteine + H(+). It participates in lipid metabolism; sphingolipid metabolism. Catalyzes methylation of the sphingoid base component of glucosylceramides (GluCers) at the C9-position. Sphingolipid C9-methylation requires 4,8-desaturated ceramides as substrates. Glucosylceramides play important roles in the growth, differentiation and pathogenicity. The methyl group at the C9-position distinguishes fungal glucosylceramides from those of plants and animals, and may thus play a role in host-pathogen interactions enabling the host to recognize the fungal attack and initiate specific defense responses. However, C-9 methylation of GlcCers is not essential for the sensitivity of F.graminearum to plant defensins MsDef1 and RsAFP2. In Gibberella zeae (strain ATCC MYA-4620 / CBS 123657 / FGSC 9075 / NRRL 31084 / PH-1) (Wheat head blight fungus), this protein is Sphingolipid C9-methyltransferase 1.